A 186-amino-acid polypeptide reads, in one-letter code: Ribosome-recycling factor (186 aa).

The protein belongs to the RRF family.

It localises to the cytoplasm. Responsible for the release of ribosomes from messenger RNA at the termination of protein biosynthesis. May increase the efficiency of translation by recycling ribosomes from one round of translation to another. This is Ribosome-recycling factor from Rickettsia peacockii (strain Rustic).